The chain runs to 205 residues: Beta-crystallin B2 (205 aa).

Residue alanine 2 is modified to N-acetylalanine. Residues 2-16 are N-terminal arm; it reads ASDHQTQAGKPQSLN. Beta/gamma crystallin 'Greek key' domains lie at 17 to 56 and 57 to 101; these read PKII…LVQA and GPWV…RPIK. Residues 102 to 106 are connecting peptide; sequence VDSQE. Beta/gamma crystallin 'Greek key' domains are found at residues 107–148 and 149–191; these read HKII…RVQS and GTWV…RRIR. Positions 193 to 205 are C-terminal arm; that stretch reads MQWHQRGAFHPSN.

It belongs to the beta/gamma-crystallin family. Homo/heterodimer, or complexes of higher-order. The structure of beta-crystallin oligomers seems to be stabilized through interactions between the N-terminal arms.

Functionally, crystallins are the dominant structural components of the vertebrate eye lens. This Homo sapiens (Human) protein is Beta-crystallin B2 (CRYBB2).